We begin with the raw amino-acid sequence, 168 residues long: Photosystem I assembly protein Ycf3 (168 aa).

TPR repeat units follow at residues alanine 35–proline 68, serine 72–leucine 105, and glycine 120–asparagine 153.

It belongs to the Ycf3 family.

It is found in the plastid. The protein resides in the chloroplast thylakoid membrane. Essential for the assembly of the photosystem I (PSI) complex. May act as a chaperone-like factor to guide the assembly of the PSI subunits. This is Photosystem I assembly protein Ycf3 from Nandina domestica (Heavenly bamboo).